A 404-amino-acid chain; its full sequence is Cysteine desulfurase IscS (404 aa).

Pyridoxal 5'-phosphate contacts are provided by residues 75-76, asparagine 155, glutamine 183, and 203-205; these read AT and SAH. Residue lysine 206 is modified to N6-(pyridoxal phosphate)lysine. Threonine 243 contributes to the pyridoxal 5'-phosphate binding site. Residue cysteine 328 is the Cysteine persulfide intermediate of the active site. Cysteine 328 contributes to the [2Fe-2S] cluster binding site.

It belongs to the class-V pyridoxal-phosphate-dependent aminotransferase family. NifS/IscS subfamily. As to quaternary structure, homodimer. Forms a heterotetramer with IscU, interacts with other sulfur acceptors. Pyridoxal 5'-phosphate is required as a cofactor.

The protein localises to the cytoplasm. The enzyme catalyses (sulfur carrier)-H + L-cysteine = (sulfur carrier)-SH + L-alanine. It participates in cofactor biosynthesis; iron-sulfur cluster biosynthesis. Functionally, master enzyme that delivers sulfur to a number of partners involved in Fe-S cluster assembly, tRNA modification or cofactor biosynthesis. Catalyzes the removal of elemental sulfur atoms from cysteine to produce alanine. Functions as a sulfur delivery protein for Fe-S cluster synthesis onto IscU, an Fe-S scaffold assembly protein, as well as other S acceptor proteins. The sequence is that of Cysteine desulfurase IscS from Pseudomonas putida (strain W619).